We begin with the raw amino-acid sequence, 434 residues long: MYSLNRLPRSAAFKSSANLLRRNASTTSAGGVNVVGFENKGPAATSSLTVAIKAGSRYETTPGVAHVLKSFAYKATASASALRTAREAELYGGVLSAALTREHLLLSAEFLRGDEEHFLNVLASVLSSSQFYRHELSELVLPVVEAETISSQAIPSTIALDLAHSLAFRRGLGNSLYANKNYPVSIDDVKSFGEAAFAKSNIAVIGTGVSTEALAKAVSNAFGAGTSSGSKLSTPKANYYGGETRVPLDIHAPATATPTMVIAFGTSSPASADLKVLKHLLGGETSVKWTPGASPLAQAADKIPGASAKAFLLPYSDAALFGVVLSAPTSAETKTLAQEVASIVKNAGEFKEEEVKRAVAKATFEDAASTETLSGFVAAAGPAALVGSVPEAQSFSGVSASSISKAAGELLKGKPTVVSIGNISVLPYADELGL.

Residues 1 to 31 constitute a mitochondrion transit peptide; that stretch reads MYSLNRLPRSAAFKSSANLLRRNASTTSAGG.

Belongs to the peptidase M16 family. UQCRC2/QCR2 subfamily. Component of the ubiquinol-cytochrome c oxidoreductase (cytochrome b-c1 complex, complex III, CIII), a multisubunit enzyme composed of 10 subunits. The complex is composed of 3 respiratory subunits cytochrome b (COB), cytochrome c1 (CYT1) and Rieske protein (RIP1), 2 core protein subunits COR1 and QCR2, and 5 low-molecular weight protein subunits QCR6, QCR7, QCR8, QCR9 and QCR10. The complex exists as an obligatory dimer and forms supercomplexes (SCs) in the inner mitochondrial membrane with a monomer or a dimer of cytochrome c oxidase (complex IV, CIV), resulting in 2 different assemblies (supercomplexes III(2)IV and III(2)IV(2)). Interacts with MRJ1.

The protein resides in the mitochondrion inner membrane. Functionally, component of the ubiquinol-cytochrome c oxidoreductase, a multisubunit transmembrane complex that is part of the mitochondrial electron transport chain which drives oxidative phosphorylation. The respiratory chain contains 3 multisubunit complexes succinate dehydrogenase (complex II, CII), ubiquinol-cytochrome c oxidoreductase (cytochrome b-c1 complex, complex III, CIII) and cytochrome c oxidase (complex IV, CIV), that cooperate to transfer electrons derived from NADH and succinate to molecular oxygen, creating an electrochemical gradient over the inner membrane that drives transmembrane transport and the ATP synthase. The cytochrome b-c1 complex catalyzes electron transfer from ubiquinol to cytochrome c, linking this redox reaction to translocation of protons across the mitochondrial inner membrane, with protons being carried across the membrane as hydrogens on the quinol. In the process called Q cycle, 2 protons are consumed from the matrix, 4 protons are released into the intermembrane space and 2 electrons are passed to cytochrome c. The protein is Cytochrome b-c1 complex subunit 2, mitochondrial of Cryptococcus neoformans var. grubii serotype A (strain H99 / ATCC 208821 / CBS 10515 / FGSC 9487) (Filobasidiella neoformans var. grubii).